The primary structure comprises 365 residues: DNA replication and repair protein RecF (365 aa).

An ATP-binding site is contributed by 30–37; sequence GDNGEGKT.

The protein belongs to the RecF family.

The protein resides in the cytoplasm. The RecF protein is involved in DNA metabolism; it is required for DNA replication and normal SOS inducibility. RecF binds preferentially to single-stranded, linear DNA. It also seems to bind ATP. This Leptospira borgpetersenii serovar Hardjo-bovis (strain JB197) protein is DNA replication and repair protein RecF.